We begin with the raw amino-acid sequence, 301 residues long: MTEARLTHLKQLEAESIHIIREVAAEFDNPVMLYSIGKDSAVMLHLAMKAFYPGKPPFPLMHVDTGWKFKEMITFRDEMVSKLGLELIVHQNQEGVEQGIGPFTHGSSKHTDVMKTQGLKQALDKYGFDAAFGGARRDEEKSRAKERVYSFRDKQHRWDPKNQRPELWNIYNGKVNKGESIRVFPLSNWTELDIWQYIYLESIPIVPLYFSEKRPVVERDGTLIMVDDERMPLNGEVPEMKSVRFRTLGCYPLTGAVESEAATLPEIIQEMLLTKSSERQGRMIDHDSSGSMEEKKKQGYF.

The interval 279–301 (RQGRMIDHDSSGSMEEKKKQGYF) is disordered.

This sequence belongs to the PAPS reductase family. CysD subfamily. In terms of assembly, heterodimer composed of CysD, the smaller subunit, and CysN.

It catalyses the reaction sulfate + ATP + H(+) = adenosine 5'-phosphosulfate + diphosphate. Its pathway is sulfur metabolism; hydrogen sulfide biosynthesis; sulfite from sulfate: step 1/3. Functionally, with CysN forms the ATP sulfurylase (ATPS) that catalyzes the adenylation of sulfate producing adenosine 5'-phosphosulfate (APS) and diphosphate, the first enzymatic step in sulfur assimilation pathway. APS synthesis involves the formation of a high-energy phosphoric-sulfuric acid anhydride bond driven by GTP hydrolysis by CysN coupled to ATP hydrolysis by CysD. This is Sulfate adenylyltransferase subunit 2 from Marinomonas sp. (strain MWYL1).